The chain runs to 186 residues: Ribosome-recycling factor (186 aa).

Residues 135 to 156 (DANDEVKKLQKDKAVSEDEGKK) are disordered.

Belongs to the RRF family.

The protein localises to the cytoplasm. In terms of biological role, responsible for the release of ribosomes from messenger RNA at the termination of protein biosynthesis. May increase the efficiency of translation by recycling ribosomes from one round of translation to another. This chain is Ribosome-recycling factor, found in Bdellovibrio bacteriovorus (strain ATCC 15356 / DSM 50701 / NCIMB 9529 / HD100).